Consider the following 532-residue polypeptide: Di/tripeptide-binding protein 2 (532 aa).

Residues 1-24 (MRPRSALRYSLLLLAFAASAAIQA) form the signal peptide.

Belongs to the bacterial solute-binding protein 5 family. The complex is composed of two ATP-binding proteins (DppD and DppF), two transmembrane proteins (DppB and DppC) and a solute-binding protein (DppA2). Five orthologous SBPs (DppA1-A5) are present in P.aeruginosa, which increases the substrate specificity of the DppBCDF transporter.

Part of the ABC transporter DppABCDF involved in the uptake of various di/tripeptides. Shows high flexibility on substrate recognition. Efficiently uses tripeptides. The polypeptide is Di/tripeptide-binding protein 2 (Pseudomonas aeruginosa (strain UCBPP-PA14)).